The following is a 293-amino-acid chain: Phosphatidylserine decarboxylase proenzyme (293 aa).

Active-site charge relay system; for autoendoproteolytic cleavage activity residues include aspartate 88, histidine 144, and serine 247. Serine 247 (schiff-base intermediate with substrate; via pyruvic acid; for decarboxylase activity) is an active-site residue. The residue at position 247 (serine 247) is a Pyruvic acid (Ser); by autocatalysis.

Belongs to the phosphatidylserine decarboxylase family. PSD-B subfamily. Prokaryotic type I sub-subfamily. In terms of assembly, heterodimer of a large membrane-associated beta subunit and a small pyruvoyl-containing alpha subunit. The cofactor is pyruvate. Is synthesized initially as an inactive proenzyme. Formation of the active enzyme involves a self-maturation process in which the active site pyruvoyl group is generated from an internal serine residue via an autocatalytic post-translational modification. Two non-identical subunits are generated from the proenzyme in this reaction, and the pyruvate is formed at the N-terminus of the alpha chain, which is derived from the carboxyl end of the proenzyme. The autoendoproteolytic cleavage occurs by a canonical serine protease mechanism, in which the side chain hydroxyl group of the serine supplies its oxygen atom to form the C-terminus of the beta chain, while the remainder of the serine residue undergoes an oxidative deamination to produce ammonia and the pyruvoyl prosthetic group on the alpha chain. During this reaction, the Ser that is part of the protease active site of the proenzyme becomes the pyruvoyl prosthetic group, which constitutes an essential element of the active site of the mature decarboxylase.

It localises to the cell membrane. It carries out the reaction a 1,2-diacyl-sn-glycero-3-phospho-L-serine + H(+) = a 1,2-diacyl-sn-glycero-3-phosphoethanolamine + CO2. It participates in phospholipid metabolism; phosphatidylethanolamine biosynthesis; phosphatidylethanolamine from CDP-diacylglycerol: step 2/2. Catalyzes the formation of phosphatidylethanolamine (PtdEtn) from phosphatidylserine (PtdSer). This is Phosphatidylserine decarboxylase proenzyme from Xylella fastidiosa (strain M12).